Consider the following 301-residue polypeptide: Beta-1,3-galactosyltransferase 5 (301 aa).

Over 1-7 (MAFPKMR) the chain is Cytoplasmic. The chain crosses the membrane as a helical; Signal-anchor for type II membrane protein span at residues 8–28 (LMYVCLLVLGALCLYFSMYSL). Residues 29 to 301 (NLFKEQSFVY…LLDYWQALEN (273 aa)) lie on the Lumenal side of the membrane. N-linked (GlcNAc...) asparagine glycans are attached at residues N130, N174, and N231.

The protein belongs to the glycosyltransferase 31 family.

It is found in the golgi apparatus membrane. The enzyme catalyses a globoside Gb4Cer (d18:1(4E)) + UDP-alpha-D-galactose = a globoside GalGb4Cer (d18:1(4E)) + UDP + H(+). Its pathway is protein modification; protein glycosylation. Its function is as follows. Catalyzes the transfer of Gal to GlcNAc-based acceptors with a preference for the core3 O-linked glycan GlcNAc(beta1,3)GalNAc structure. Can use glycolipid LC3Cer as an efficient acceptor. The polypeptide is Beta-1,3-galactosyltransferase 5 (B3GALT5) (Pan paniscus (Pygmy chimpanzee)).